The chain runs to 516 residues: Circadian clock oscillator protein KaiC (516 aa).

2 consecutive KaiC domains span residues 1–244 and 258–516; these read MNQP…INIF and ARIS…TLPE. Positions 46, 47, 48, 49, 50, 51, 86, 221, 222, 223, 225, 227, 237, 287, 288, 289, 290, 291, 292, and 293 each coordinate ATP. Residue Thr-50 coordinates Mg(2+). A Mg(2+)-binding site is contributed by Thr-292. Glu-315 provides a ligand contact to Mg(2+). Trp-328 contacts ATP. The residue at position 428 (Ser-428) is a Phosphoserine; by autocatalysis. Thr-429 carries the phosphothreonine; by autocatalysis modification. ATP-binding residues include Arg-448, Lys-454, Met-455, Arg-456, Ser-458, His-460, and Lys-462.

This sequence belongs to the KaiC family. In terms of assembly, homohexamer; hexamerization is dependent on ATP-binding. The KaiABC complex composition changes during the circadian cycle to control KaiC phosphorylation. Complexes KaiC(6), KaiA(2-4):KaiC(6), KaiB(6):KaiC(6) and KaiC(6):KaiB(6):KaiA(12) are among the most important forms, many form cooperatively. KaiC interacts with SasA, activating its autokinase function and leading to RpaA activation. It depends on Mg(2+) as a cofactor. In terms of processing, phosphorylated on serine and threonine residues by autocatalysis. Has a 4 step phosphorylation cycle; the autokinase acts first on Thr-429, then Ser-428. When Ser-428 is modified KaiC switches to an autophosphatase mode, acting first on phospho-Thr-429 then phospho-Ser-428.

The catalysed reaction is L-seryl-[protein] + ATP = O-phospho-L-seryl-[protein] + ADP + H(+). The enzyme catalyses L-threonyl-[protein] + ATP = O-phospho-L-threonyl-[protein] + ADP + H(+). It catalyses the reaction ATP + H2O = ADP + phosphate + H(+). Its activity is regulated as follows. The interaction with KaiA enhances its phosphorylation status, while the interaction with KaiB decreases it. Central component of the KaiABC oscillator complex, which constitutes the main circadian regulator in cyanobacteria. Complex composition changes during the circadian cycle to control KaiC phosphorylation. KaiA stimulates KaiC autophosphorylation, while KaiB sequesters KaiA, leading to KaiC autodephosphorylation. Clock output pathways impact the RpaA transcriptional regulator. KaiC enhances the autophosphorylation activity of SasA, which then transfers its phosphate group to RpaA to activate it. KaiB and KaiC together enhance the phospho-RpaA dephosphatase activity of CikA. Functionally, has a weak, temperature-independent ATPase activity; ATPase activity defines the circadian period. The phosphorylation state of KaiC modulates its ATPase activity and effects KaiB binding. The polypeptide is Circadian clock oscillator protein KaiC (Picosynechococcus sp. (strain ATCC 27264 / PCC 7002 / PR-6) (Agmenellum quadruplicatum)).